The following is a 510-amino-acid chain: MAGSRRRGLQARVRPLFCALLLSLSRFVGGDGVGGDPAAGLPHRRFEYKYSFKGPHLVQSDGTVPFWAHAGNAIPSSDQIRVAPSLKSQRGSVWTKAKAAFENWEVEVTFRVTGRGRIGADGLAIWYTENQGLEGPVFGSADLWNGVGIFFDSFDNDGKKNNPAIVIIGNNGQIHYDHQNDGASQALASCQRDFRNKPYPVRAKIIYYQKTLTVMINNGFTPDKNDYEFCAKVENMIIPAQGHFGVSAATGGLADDHDVLSFLTFQLTEPGKEPPTPDKEISEKEKEKYQEEFEHFQQELDKKKEEFQKGHPDLQGQPAEEIFESVGDRELRQVFEGQNRIHLEIKQLNRQLDMILDEQRRYVSSLTEEISKRGAGMPGQHGQISQQELDTVVKTQHEILRQVNEMKNSMSETVRLVSGMQHPGSAGGVYETAQHFADIKEHLHTVKRDIDNLVQRHMLSNEKPKCPELPPFPSCLSTVHFIIFVVVQTVLFIGYIMYRSQQEAAAKKFF.

The signal sequence occupies residues 1–30 (MAGSRRRGLQARVRPLFCALLLSLSRFVGG). The Lumenal portion of the chain corresponds to 31 to 477 (DGVGGDPAAG…ELPPFPSCLS (447 aa)). The region spanning 44-267 (RRFEYKYSFK…DVLSFLTFQL (224 aa)) is the L-type lectin-like domain. A carbohydrate contacts are provided by Ser-88 and Asp-121. The Ca(2+) site is built by Asp-152, Phe-154, and Asn-156. Positions 156 and 178 each coordinate a carbohydrate. Asp-181 lines the Ca(2+) pocket. A disulfide bridge links Cys-190 with Cys-230. 251–253 (GGL) provides a ligand contact to a carbohydrate. Ser-425 carries the phosphoserine modification. A helical membrane pass occupies residues 478–498 (TVHFIIFVVVQTVLFIGYIMY). The Cytoplasmic segment spans residues 499–510 (RSQQEAAAKKFF). The segment at 499-510 (RSQQEAAAKKFF) is mediates interaction with RAB3GAP1, RAB3GAP2 and UBXN6. Residues 509 to 510 (FF) carry the ER export motif motif.

As to quaternary structure, exists both as a covalent disulfide-linked homohexamer, and a complex of three disulfide-linked dimers non-covalently kept together. Interacts with MCFD2. May interact with TMEM115. Interacts with RAB3GAP1 and RAB3GAP2. Interacts with UBXN6. Interacts with SERPINA1/alpha1-antitrypsin. Interacts with BET1.

Its subcellular location is the endoplasmic reticulum-Golgi intermediate compartment membrane. The protein resides in the golgi apparatus membrane. It localises to the endoplasmic reticulum membrane. Functionally, mannose-specific lectin. May recognize sugar residues of glycoproteins, glycolipids, or glycosylphosphatidyl inositol anchors and may be involved in the sorting or recycling of proteins, lipids, or both. The LMAN1-MCFD2 complex forms a specific cargo receptor for the ER-to-Golgi transport of selected proteins. The polypeptide is Protein ERGIC-53 (LMAN1) (Chlorocebus aethiops (Green monkey)).